The primary structure comprises 400 residues: Snake venom metalloproteinase H1 (400 aa).

A signal peptide spans 1 to 6 (FPYQGS). A propeptide spanning residues 7 to 176 (SIILESGNVN…KKASQLIVST (170 aa)) is cleaved from the precursor. The Peptidase M12B domain occupies 180–377 (RYMEIVIVVD…ENPPCILNKP (198 aa)). Ca(2+) contacts are provided by Glu183 and Asp267. 3 disulfide bridges follow: Cys291–Cys372, Cys331–Cys356, and Cys333–Cys339. A Zn(2+)-binding site is contributed by His316. The active site involves Glu317. Zn(2+) is bound by residues His320 and His326. Residues Cys372, Asn375, Val387, Asn390, Leu392, Glu394, and Asp400 each coordinate Ca(2+). Positions 378–400 (LRTDTVSTPVSGNELLEAGKDYD) are excised as a propeptide.

This sequence belongs to the venom metalloproteinase (M12B) family. P-I subfamily. Monomer. Zn(2+) is required as a cofactor. Expressed by the venom gland.

Its subcellular location is the secreted. In terms of biological role, snake venom metalloproteinase that impairs hemostasis in the envenomed animal. The sequence is that of Snake venom metalloproteinase H1 from Deinagkistrodon acutus (Hundred-pace snake).